The primary structure comprises 314 residues: 2,3-dihydroxyphenylpropionate/2,3-dihydroxicinnamic acid 1,2-dioxygenase 2 (314 aa).

His-115 (proton donor) is an active-site residue. The Proton acceptor role is filled by His-179.

Belongs to the LigB/MhpB extradiol dioxygenase family. As to quaternary structure, homotetramer. Fe(2+) is required as a cofactor.

It catalyses the reaction 3-(2,3-dihydroxyphenyl)propanoate + O2 = (2Z,4E)-2-hydroxy-6-oxonona-2,4-dienedioate + H(+). The enzyme catalyses (2E)-3-(2,3-dihydroxyphenyl)prop-2-enoate + O2 = (2Z,4E,7E)-2-hydroxy-6-oxonona-2,4,7-trienedioate + H(+). It participates in aromatic compound metabolism; 3-phenylpropanoate degradation. In terms of biological role, catalyzes the non-heme iron(II)-dependent oxidative cleavage of 2,3-dihydroxyphenylpropionic acid and 2,3-dihydroxicinnamic acid into 2-hydroxy-6-ketononadienedioate and 2-hydroxy-6-ketononatrienedioate, respectively. This chain is 2,3-dihydroxyphenylpropionate/2,3-dihydroxicinnamic acid 1,2-dioxygenase 2 (mhpB2), found in Pseudomonas putida (Arthrobacter siderocapsulatus).